A 383-amino-acid polypeptide reads, in one-letter code: Oxysterol-binding protein-related protein 4B (383 aa).

Belongs to the OSBP family. Expressed in stems and flowers.

Functionally, may be involved in the transport of sterols. The chain is Oxysterol-binding protein-related protein 4B (ORP4B) from Arabidopsis thaliana (Mouse-ear cress).